A 297-amino-acid chain; its full sequence is Lysenin (297 aa).

The tract at residues 10–33 (EQIEVDVVAVWKEGYVYENRGSTS) is N-terminal cap domain. The segment at 34-107 (VDQKITITKG…SKVIEHTITI (74 aa)) is beta-hairpin domain. The N-terminal cap domain stretch occupies residues 108-156 (PPTSKFTRWQLNADVGGADIEYMYLIDEVTPIGGTQSIPQVITSRAKII). Residues 157–297 (VGRQIILGKT…EDKWILEVVG (141 aa)) are C-terminal receptor-binding domain. An N-(acyl)-sphingosylphosphocholine-binding residues include K185, S227, Y233, and Y282. An intrachain disulfide couples C272 to C283.

The protein belongs to the lysenin family. In terms of assembly, binds to sphingomyelin as a monomer by using its C-terminal domain. Forms a nonamer when sphingomyelin/lysenin ratio is lower than ca 500. Oligomerization, but not binding, is influenced by the fluidity of sphingomyelin. In terms of tissue distribution, expressed by coelomocytes.

The protein resides in the secreted. It localises to the target cell membrane. Functionally, pore-forming toxin that defensively acts against parasitic microorganisms by forming pores in sphingomyelin-containing membranes. Has hemolytic activity and is also cytotoxic to spermatozoa of some species of invertebrates and many species of vertebrates and to amphibian larvae, guinea pig polymorphonuclear leukocytes, chicken fibroblasts, normal spleen cells and various tumor cells. Is lethal for various species of reptiles, amphibian, birds and mammals. Induces smooth muscle contraction. It binds sphingomyelin and induces hemolysis in the same manner as lysenin-related protein 2, and is 10-fold more effective than lysenin-related protein 1. This Eisenia fetida (Red wiggler worm) protein is Lysenin.